The chain runs to 236 residues: Coat protein (236 aa).

Positions 1–27 (MTTPANTTQAVGSTTSTTTTTAGATPA) are disordered. Positions 7 to 27 (TTQAVGSTTSTTTTTAGATPA) are enriched in low complexity.

Belongs to the potexvirus capsid protein family.

Its subcellular location is the virion. Functionally, required for genome encapsidation. Forms ribonucleoprotein complexes along with TGB1 helicase and viral RNA. In Brassica campestris (Field mustard), this protein is Coat protein.